The following is a 335-amino-acid chain: Glyceraldehyde-3-phosphate dehydrogenase 2 (335 aa).

NAD(+) is bound by residues 13-14 (RI), Asp35, and Arg80. Phosphoserine is present on residues Ser125 and Ser151. 151 to 153 (SCT) contributes to the D-glyceraldehyde 3-phosphate binding site. Cys152 serves as the catalytic Nucleophile. Residues Thr153, Thr154, Thr182, and Thr184 each carry the phosphothreonine modification. Thr182 is a binding site for D-glyceraldehyde 3-phosphate. 3 positions are modified to phosphoserine: Ser192, Ser203, and Ser209. Thr211 carries the phosphothreonine modification. Residues 211 to 212 (TG) and Arg234 contribute to the D-glyceraldehyde 3-phosphate site. Thr237 carries the phosphothreonine modification. Ser241 bears the Phosphoserine mark. Asn316 contacts NAD(+).

The protein belongs to the glyceraldehyde-3-phosphate dehydrogenase family. As to quaternary structure, homotetramer.

It localises to the cytoplasm. The enzyme catalyses D-glyceraldehyde 3-phosphate + phosphate + NAD(+) = (2R)-3-phospho-glyceroyl phosphate + NADH + H(+). The protein operates within carbohydrate degradation; glycolysis; pyruvate from D-glyceraldehyde 3-phosphate: step 1/5. This Schizosaccharomyces pombe (strain 972 / ATCC 24843) (Fission yeast) protein is Glyceraldehyde-3-phosphate dehydrogenase 2 (gpd3).